We begin with the raw amino-acid sequence, 215 residues long: Ribose-5-phosphate isomerase A (215 aa).

Residues 26 to 29 (TGST), 79 to 82 (DGAD), and 92 to 95 (KGGG) each bind substrate. The active-site Proton acceptor is the Glu101. Lys119 provides a ligand contact to substrate.

This sequence belongs to the ribose 5-phosphate isomerase family. Homodimer.

The catalysed reaction is aldehydo-D-ribose 5-phosphate = D-ribulose 5-phosphate. It participates in carbohydrate degradation; pentose phosphate pathway; D-ribose 5-phosphate from D-ribulose 5-phosphate (non-oxidative stage): step 1/1. Its function is as follows. Catalyzes the reversible conversion of ribose-5-phosphate to ribulose 5-phosphate. This chain is Ribose-5-phosphate isomerase A, found in Xanthomonas oryzae pv. oryzae (strain PXO99A).